Consider the following 340-residue polypeptide: Glycerol-3-phosphate dehydrogenase [NAD(P)+] (340 aa).

Residues W11, R33, and K110 each coordinate NADPH. Residues K110, G144, and S146 each contribute to the sn-glycerol 3-phosphate site. A148 is a binding site for NADPH. The sn-glycerol 3-phosphate site is built by K199, D252, S262, R263, and N264. K199 (proton acceptor) is an active-site residue. Position 263 (R263) interacts with NADPH. V287 and E289 together coordinate NADPH.

This sequence belongs to the NAD-dependent glycerol-3-phosphate dehydrogenase family.

The protein localises to the cytoplasm. The enzyme catalyses sn-glycerol 3-phosphate + NAD(+) = dihydroxyacetone phosphate + NADH + H(+). The catalysed reaction is sn-glycerol 3-phosphate + NADP(+) = dihydroxyacetone phosphate + NADPH + H(+). Its pathway is membrane lipid metabolism; glycerophospholipid metabolism. Functionally, catalyzes the reduction of the glycolytic intermediate dihydroxyacetone phosphate (DHAP) to sn-glycerol 3-phosphate (G3P), the key precursor for phospholipid synthesis. The protein is Glycerol-3-phosphate dehydrogenase [NAD(P)+] of Polynucleobacter necessarius subsp. necessarius (strain STIR1).